The chain runs to 761 residues: Translation initiation factor IF-2 (761 aa).

The tract at residues D39–P179 is disordered. Residues K45 to Q105 show a composition bias toward low complexity. The span at T106–A120 shows a compositional bias: polar residues. Low complexity predominate over residues P142 to N154. The span at R155–Q168 shows a compositional bias: basic residues. A tr-type G domain is found at E262–D435. A G1 region spans residues G271 to T278. G271–T278 is a GTP binding site. Positions G296–H300 are G2. The G3 stretch occupies residues D317–G320. Residues D317 to H321 and N371 to D374 each bind GTP. A G4 region spans residues N371–D374. Residues S407–L409 are G5.

This sequence belongs to the TRAFAC class translation factor GTPase superfamily. Classic translation factor GTPase family. IF-2 subfamily.

Its subcellular location is the cytoplasm. Functionally, one of the essential components for the initiation of protein synthesis. Protects formylmethionyl-tRNA from spontaneous hydrolysis and promotes its binding to the 30S ribosomal subunits. Also involved in the hydrolysis of GTP during the formation of the 70S ribosomal complex. The protein is Translation initiation factor IF-2 of Shouchella clausii (strain KSM-K16) (Alkalihalobacillus clausii).